A 495-amino-acid polypeptide reads, in one-letter code: tRNA modification GTPase MnmE (495 aa).

(6S)-5-formyl-5,6,7,8-tetrahydrofolate contacts are provided by R28, E89, and K128. Residues 223–417 form the TrmE-type G domain; that stretch reads GVRIVLGGCP…LRAQTLHLLH (195 aa). Residue N233 coordinates K(+). GTP is bound by residues 233-238, 252-258, and 277-280; these read NAGKSS, SSVPGTT, and DTAG. S237 lines the Mg(2+) pocket. K(+) is bound by residues S252, V254, and T257. Residue T258 participates in Mg(2+) binding. Residue K495 coordinates (6S)-5-formyl-5,6,7,8-tetrahydrofolate.

It belongs to the TRAFAC class TrmE-Era-EngA-EngB-Septin-like GTPase superfamily. TrmE GTPase family. In terms of assembly, homodimer. Heterotetramer of two MnmE and two MnmG subunits. The cofactor is K(+).

Its subcellular location is the cytoplasm. Exhibits a very high intrinsic GTPase hydrolysis rate. Involved in the addition of a carboxymethylaminomethyl (cmnm) group at the wobble position (U34) of certain tRNAs, forming tRNA-cmnm(5)s(2)U34. This chain is tRNA modification GTPase MnmE, found in Treponema pallidum (strain Nichols).